The chain runs to 407 residues: Phosphopentomutase (407 aa).

Asp-10, Asp-306, His-311, Asp-347, His-348, and His-359 together coordinate Mn(2+).

This sequence belongs to the phosphopentomutase family. It depends on Mn(2+) as a cofactor.

Its subcellular location is the cytoplasm. The enzyme catalyses 2-deoxy-alpha-D-ribose 1-phosphate = 2-deoxy-D-ribose 5-phosphate. It carries out the reaction alpha-D-ribose 1-phosphate = D-ribose 5-phosphate. It participates in carbohydrate degradation; 2-deoxy-D-ribose 1-phosphate degradation; D-glyceraldehyde 3-phosphate and acetaldehyde from 2-deoxy-alpha-D-ribose 1-phosphate: step 1/2. In terms of biological role, isomerase that catalyzes the conversion of deoxy-ribose 1-phosphate (dRib-1-P) and ribose 1-phosphate (Rib-1-P) to deoxy-ribose 5-phosphate (dRib-5-P) and ribose 5-phosphate (Rib-5-P), respectively. The sequence is that of Phosphopentomutase from Buchnera aphidicola subsp. Acyrthosiphon pisum (strain APS) (Acyrthosiphon pisum symbiotic bacterium).